A 285-amino-acid chain; its full sequence is MAHQAHPFRSVLYIPGSKERALEKARGLAADAIIFDLEDAVAHDEKIHARRLLKTTLETADYGHRFRIVRVNGMDTEWGRADLEAFAEAKADAILIPKVSRAADLEAVAALVPDLPLWAMMETAQGMLNAAEIAAHPRLTGMVMGTNDLAKELGSRYRPDRLAMQAGLGLCLLAARAHGLTIVDGVYNAFRDEEGLRAECEQGRDMGFDGKTLIHPAQLEIANAVFSPSPAEIELANRQIAAFEEAERHGQGVAVVDGKIVENLHIVTARQTLAKAEAIAAFRAS.

Arginine 70 and glutamate 122 together coordinate substrate. 2 residues coordinate Mg(2+): glutamate 122 and aspartate 148.

It belongs to the HpcH/HpaI aldolase family. Homodimer or homotrimer. Mg(2+) serves as cofactor.

It carries out the reaction (S)-malyl-CoA + H2O = (S)-malate + CoA + H(+). Functionally, catalyzes the hydrolysis of (3S)-malyl-CoA to (3S)-malate and free CoA. Inactive towards beta-methylmalyl-CoA and other CoA esters. This Cereibacter sphaeroides (strain KD131 / KCTC 12085) (Rhodobacter sphaeroides) protein is (3S)-malyl-CoA thioesterase.